Here is a 760-residue protein sequence, read N- to C-terminus: Transferrin receptor protein 1 (760 aa).

The Cytoplasmic portion of the chain corresponds to 1 to 65 (MMDQARSAFS…VTKPKRCGGS (65 aa)). The interval 1–67 (MMDQARSAFS…KPKRCGGSIC (67 aa)) is mediates interaction with SH3BP4. Phosphoserine occurs at positions 10 and 19. Tyr20 carries the post-translational modification Phosphotyrosine. Positions 20–23 (YTRF) match the Endocytosis signal motif. A Phosphothreonine modification is found at Thr21. At Ser24 the chain carries Phosphoserine. Residues 58–61 (KPKR) carry the Stop-transfer sequence motif. 2 S-palmitoyl cysteine lipidation sites follow: Cys62 and Cys67. Residues 66 to 86 (ICYGTIAVIIFFLIGFMIGYL) form a helical; Signal-anchor for type II membrane protein membrane-spanning segment. The Extracellular portion of the chain corresponds to 87–760 (GYCKGVEPKT…GDVWDIDNEF (674 aa)). The region spanning 223 to 313 (SKAATVTGKL…GTGDPYTPGF (91 aa)) is the PA domain. 2 N-linked (GlcNAc...) asparagine glycosylation sites follow: Asn251 and Asn317. A ligand-binding region spans residues 569–760 (TMDTYKELTE…GDVWDIDNEF (192 aa)). A Cell attachment site motif is present at residues 646–648 (RGD). N-linked (GlcNAc...) asparagine glycans are attached at residues Asn722 and Asn727.

Belongs to the peptidase M28 family. M28B subfamily. As to quaternary structure, homodimer; disulfide-linked. Binds one transferrin or HFE molecule per subunit. Interacts with SH3BP4. Interacts with STEAP3; facilitates TFRC endocytosis in erythroid precursor cells. In terms of processing, stearoylated by ZDHHC6 which inhibits TFRC-mediated activation of the JNK pathway and promotes mitochondrial fragmentation. Stearoylation does not affect iron uptake.

It localises to the cell membrane. The protein resides in the melanosome. Functionally, cellular uptake of iron occurs via receptor-mediated endocytosis of ligand-occupied transferrin receptor into specialized endosomes. Endosomal acidification leads to iron release. The apotransferrin-receptor complex is then recycled to the cell surface with a return to neutral pH and the concomitant loss of affinity of apotransferrin for its receptor. Transferrin receptor is necessary for development of erythrocytes and the nervous system. Positively regulates T and B cell proliferation through iron uptake. Acts as a lipid sensor that regulates mitochondrial fusion by regulating activation of the JNK pathway. When dietary levels of stearate (C18:0) are low, promotes activation of the JNK pathway, resulting in HUWE1-mediated ubiquitination and subsequent degradation of the mitofusin MFN2 and inhibition of mitochondrial fusion. When dietary levels of stearate (C18:0) are high, TFRC stearoylation inhibits activation of the JNK pathway and thus degradation of the mitofusin MFN2. Mediates uptake of NICOL1 into fibroblasts where it may regulate extracellular matrix production. The protein is Transferrin receptor protein 1 (TFRC) of Pongo abelii (Sumatran orangutan).